Reading from the N-terminus, the 560-residue chain is Alpha-farnesene synthase (560 aa).

3 residues coordinate Mg(2+): D308, D312, and E462. The short motif at 308–312 (DDIYD) is the DDXXD motif element.

Belongs to the terpene synthase family. Tpsa subfamily. Mg(2+) is required as a cofactor. In terms of tissue distribution, expressed in the rind tissues of ripe fruits.

The protein localises to the cytoplasm. The catalysed reaction is (2E,6E)-farnesyl diphosphate = (3E,6E)-alpha-farnesene + diphosphate. It participates in secondary metabolite biosynthesis; terpenoid biosynthesis. Functionally, sesquiterpene synthase producing exclusively alpha-farnesene. Associated with the production of sesquiterpenes responsible for the aroma of the fruit. The protein is Alpha-farnesene synthase of Cucumis melo (Muskmelon).